The chain runs to 20 residues: Putative serine protease (20 aa).

The protein belongs to the peptidase S1 family.

It is found in the secreted. Binds the A.niger cell wall component alpha-1,3-glucan, a fungal pathogen-associated molecular pattern (PAMP) that activates the host immune response. The polypeptide is Putative serine protease (Galleria mellonella (Greater wax moth)).